The chain runs to 124 residues: Large ribosomal subunit protein bL20c (124 aa).

The protein belongs to the bacterial ribosomal protein bL20 family.

It is found in the plastid. Its subcellular location is the chloroplast. In terms of biological role, binds directly to 23S ribosomal RNA and is necessary for the in vitro assembly process of the 50S ribosomal subunit. It is not involved in the protein synthesizing functions of that subunit. This Stigeoclonium helveticum (Green alga) protein is Large ribosomal subunit protein bL20c.